Here is a 478-residue protein sequence, read N- to C-terminus: TFIIA-alpha and beta-like factor (478 aa).

A disordered region spans residues 309-427 (VKQPRNIEEP…SGDDVSEQDV (119 aa)). Over residues 390–401 (SISNEDSATNSS) the composition is skewed to polar residues. The span at 411 to 427 (VEEDPLNSGDDVSEQDV) shows a compositional bias: acidic residues.

Belongs to the TFIIA subunit 1 family. In terms of tissue distribution, testis specific. Detected in adult testis mostly in round and elongating spermatids (at protein level). Detected in testis.

It is found in the nucleus. In terms of biological role, may function as a testis specific transcription factor. Binds DNA in conjunction with GTF2A2 and TBP (the TATA-binding protein) and together with GTF2A2, allows mRNA transcription. This is TFIIA-alpha and beta-like factor (GTF2A1L) from Homo sapiens (Human).